The sequence spans 423 residues: Glucose-1-phosphate adenylyltransferase (423 aa).

Residues Tyr98, Gly163, 178–179, and Ser189 each bind alpha-D-glucose 1-phosphate; that span reads EK.

Belongs to the bacterial/plant glucose-1-phosphate adenylyltransferase family. As to quaternary structure, homotetramer.

The enzyme catalyses alpha-D-glucose 1-phosphate + ATP + H(+) = ADP-alpha-D-glucose + diphosphate. It participates in glycan biosynthesis; glycogen biosynthesis. Functionally, involved in the biosynthesis of ADP-glucose, a building block required for the elongation reactions to produce glycogen. Catalyzes the reaction between ATP and alpha-D-glucose 1-phosphate (G1P) to produce pyrophosphate and ADP-Glc. The sequence is that of Glucose-1-phosphate adenylyltransferase from Thermotoga neapolitana (strain ATCC 49049 / DSM 4359 / NBRC 107923 / NS-E).